Reading from the N-terminus, the 154-residue chain is Snaclec agglucetin subunit alpha-1 (154 aa).

The N-terminal stretch at 1–23 (MGRFIFVSFGLLVVFLSLSGTGA) is a signal peptide. Disulfide bonds link C27–C38, C55–C150, and C125–C142. In terms of domain architecture, C-type lectin spans 34–151 (YDQSCYRVFK…CGSEYAFVCK (118 aa)). N116 carries an N-linked (GlcNAc...) asparagine glycan.

The protein belongs to the snaclec family. As to quaternary structure, heterotetramer of the subunits alpha-1, alpha-2, beta-1 and beta-2; disulfide-linked. In terms of tissue distribution, expressed by the venom gland.

Its subcellular location is the secreted. Its function is as follows. Agglucetin specifically causes platelet aggregation and surface exposure of integrin alpha-IIb/beta-3 with a GPIb-(GP1BA-) dependent manner in washed platelets. It binds to human platelets in a saturable manner, and its binding is specifically blocked by anti-GP Ib mAb. It regulates endothelial cell survival and promotes angiogenesis by activating integrin alpha-v/beta-3 signaling through FAK/phosphatidylinositol 3-kinase (PI3K)/Akt pathway. This chain is Snaclec agglucetin subunit alpha-1, found in Deinagkistrodon acutus (Hundred-pace snake).